A 239-amino-acid polypeptide reads, in one-letter code: Geranylgeranylglyceryl phosphate synthase (239 aa).

K13 contributes to the sn-glycerol 1-phosphate binding site. Residues D15 and T42 each coordinate Mg(2+). Sn-glycerol 1-phosphate is bound by residues 162–167 (YIEYSG), G192, and 212–213 (GD).

This sequence belongs to the GGGP/HepGP synthase family. Group I subfamily. Mg(2+) is required as a cofactor.

It is found in the cytoplasm. It carries out the reaction sn-glycerol 1-phosphate + (2E,6E,10E)-geranylgeranyl diphosphate = sn-3-O-(geranylgeranyl)glycerol 1-phosphate + diphosphate. The protein operates within membrane lipid metabolism; glycerophospholipid metabolism. Prenyltransferase that catalyzes the transfer of the geranylgeranyl moiety of geranylgeranyl diphosphate (GGPP) to the C3 hydroxyl of sn-glycerol-1-phosphate (G1P). This reaction is the first ether-bond-formation step in the biosynthesis of archaeal membrane lipids. This chain is Geranylgeranylglyceryl phosphate synthase, found in Haloquadratum walsbyi (strain DSM 16790 / HBSQ001).